Reading from the N-terminus, the 177-residue chain is Ribulose bisphosphate carboxylase small subunit, chloroplastic 6 (177 aa).

The transit peptide at 1-56 directs the protein to the chloroplast; the sequence is MASSMMASTAAVARVGPAQTNMVAPFNGLRSSVAFPATRKANNDLSTLPSNGGRVS.

The protein belongs to the RuBisCO small chain family. As to quaternary structure, heterohexadecamer of 8 large and 8 small subunits.

Its subcellular location is the plastid. The protein localises to the chloroplast. Its function is as follows. RuBisCO catalyzes two reactions: the carboxylation of D-ribulose 1,5-bisphosphate, the primary event in carbon dioxide fixation, as well as the oxidative fragmentation of the pentose substrate. Both reactions occur simultaneously and in competition at the same active site. Although the small subunit is not catalytic it is essential for maximal activity. In Lemna gibba (Swollen duckweed), this protein is Ribulose bisphosphate carboxylase small subunit, chloroplastic 6.